A 788-amino-acid chain; its full sequence is Endonuclease MutS2 (788 aa).

332–339 contacts ATP; the sequence is GPNTGGKT. The Smr domain occupies 713-788; that stretch reads VDLRGMDAEE…GTGVTVVEIK (76 aa).

The protein belongs to the DNA mismatch repair MutS family. MutS2 subfamily. As to quaternary structure, homodimer. Binds to stalled ribosomes, contacting rRNA.

Functionally, endonuclease that is involved in the suppression of homologous recombination and thus may have a key role in the control of bacterial genetic diversity. In terms of biological role, acts as a ribosome collision sensor, splitting the ribosome into its 2 subunits. Detects stalled/collided 70S ribosomes which it binds and splits by an ATP-hydrolysis driven conformational change. Acts upstream of the ribosome quality control system (RQC), a ribosome-associated complex that mediates the extraction of incompletely synthesized nascent chains from stalled ribosomes and their subsequent degradation. Probably generates substrates for RQC. The polypeptide is Endonuclease MutS2 (Clostridium botulinum (strain Loch Maree / Type A3)).